Here is a 370-residue protein sequence, read N- to C-terminus: Histidinol-phosphate aminotransferase (370 aa).

Lys-231 is subject to N6-(pyridoxal phosphate)lysine.

Belongs to the class-II pyridoxal-phosphate-dependent aminotransferase family. Histidinol-phosphate aminotransferase subfamily. Homodimer. Pyridoxal 5'-phosphate is required as a cofactor.

The catalysed reaction is L-histidinol phosphate + 2-oxoglutarate = 3-(imidazol-4-yl)-2-oxopropyl phosphate + L-glutamate. Its pathway is amino-acid biosynthesis; L-histidine biosynthesis; L-histidine from 5-phospho-alpha-D-ribose 1-diphosphate: step 7/9. The protein is Histidinol-phosphate aminotransferase of Paracidovorax citrulli (strain AAC00-1) (Acidovorax citrulli).